The sequence spans 141 residues: Hemoglobin subunit alpha (141 aa).

Residues 1-141 (VLSSTDKSNV…VSTVLTSKYR (141 aa)) form the Globin domain. Ser-3 is modified (phosphoserine). N6-succinyllysine occurs at positions 7 and 11. N6-acetyllysine; alternate is present on Lys-16. An N6-succinyllysine; alternate modification is found at Lys-16. Tyr-24 carries the phosphotyrosine modification. A Phosphoserine modification is found at Ser-35. Lys-40 carries the N6-succinyllysine modification. His-58 provides a ligand contact to O2. His-87 serves as a coordination point for heme b. Ser-102 bears the Phosphoserine mark. Thr-108 carries the post-translational modification Phosphothreonine. Ser-124 and Ser-131 each carry phosphoserine. Residues Thr-134 and Thr-137 each carry the phosphothreonine modification. Ser-138 carries the phosphoserine modification.

This sequence belongs to the globin family. In terms of assembly, heterotetramer of two alpha chains and two beta chains. In terms of tissue distribution, red blood cells.

Involved in oxygen transport from the lung to the various peripheral tissues. Its function is as follows. Hemopressin acts as an antagonist peptide of the cannabinoid receptor CNR1. Hemopressin-binding efficiently blocks cannabinoid receptor CNR1 and subsequent signaling. The polypeptide is Hemoglobin subunit alpha (Pteropus vampyrus (Large flying fox)).